Reading from the N-terminus, the 668-residue chain is tRNA 5-methylaminomethyl-2-thiouridine biosynthesis bifunctional protein MnmC (668 aa).

The segment at 1 to 245 (MKHYSIQPAN…KREMLCGVME (245 aa)) is tRNA (mnm(5)s(2)U34)-methyltransferase. The segment at 270–668 (IGGGIASALL…LLKGKAVKAG (399 aa)) is FAD-dependent cmnm(5)s(2)U34 oxidoreductase.

The protein in the N-terminal section; belongs to the methyltransferase superfamily. tRNA (mnm(5)s(2)U34)-methyltransferase family. It in the C-terminal section; belongs to the DAO family. It depends on FAD as a cofactor.

Its subcellular location is the cytoplasm. The enzyme catalyses 5-aminomethyl-2-thiouridine(34) in tRNA + S-adenosyl-L-methionine = 5-methylaminomethyl-2-thiouridine(34) in tRNA + S-adenosyl-L-homocysteine + H(+). Its function is as follows. Catalyzes the last two steps in the biosynthesis of 5-methylaminomethyl-2-thiouridine (mnm(5)s(2)U) at the wobble position (U34) in tRNA. Catalyzes the FAD-dependent demodification of cmnm(5)s(2)U34 to nm(5)s(2)U34, followed by the transfer of a methyl group from S-adenosyl-L-methionine to nm(5)s(2)U34, to form mnm(5)s(2)U34. This chain is tRNA 5-methylaminomethyl-2-thiouridine biosynthesis bifunctional protein MnmC, found in Shigella flexneri serotype 5b (strain 8401).